The primary structure comprises 2153 residues: Genome polyprotein (2153 aa).

Gly-2 is lipidated: N-myristoyl glycine; by host. Topologically, residues 2 to 1466 (GAQVSRQNVG…DLNIANSIIT (1465 aa)) are cytoplasmic. The interval 565 to 582 (PITQNPVERYVDEVLNEV) is amphipathic alpha-helix. Active-site for protease 2A activity residues include His-871 and Asp-888. Residues Cys-905 and Cys-907 each coordinate Zn(2+). Cys-959 serves as the catalytic For protease 2A activity. Positions 965 and 967 each coordinate Zn(2+). Residues 1091 to 1160 (SDSWLKKFTE…NLRAADTNTQ (70 aa)) are membrane-binding. Residues 1091 to 1224 (SDSWLKKFTE…PPGTGKSITT (134 aa)) form an oligomerization region. The segment at 1112-1116 (GNKIS) is RNA-binding. An SF3 helicase domain is found at 1186-1346 (KRIKVLYHKC…YKDNQGKLDV (161 aa)). Cys-1353, Cys-1364, and Cys-1369 together coordinate Zn(2+). The C4-type; degenerate zinc-finger motif lies at 1353 to 1369 (CDVDSKIGNAKCCPFVC). Residues 1396 to 1403 (EDKRRRQV) form an RNA-binding region. The tract at residues 1407 to 1412 (MSAIFQ) is oligomerization. An intramembrane segment occupies 1467–1482 (IIANIISIAGIIYIIY). At 1483-2153 (KLFCSLQGPY…LLRHEWYEKF (671 aa)) the chain is on the cytoplasmic side. Tyr-1492 carries the post-translational modification O-(5'-phospho-RNA)-tyrosine. The 179-residue stretch at 1511–1689 (GPEEEFGMSI…FSSMLLRSYF (179 aa)) folds into the Peptidase C3 domain. Active-site for protease 3C activity residues include His-1550, Glu-1581, and Cys-1657. Residues 1921–2034 (DCIMAFDYTN…SYKYKLDMEA (114 aa)) enclose the RdRp catalytic domain. Asp-1927 and Asp-2020 together coordinate Mg(2+).

This sequence belongs to the picornaviruses polyprotein family. As to quaternary structure, interacts with capsid protein VP1 and capsid protein VP3 to form heterotrimeric protomers. In terms of assembly, interacts with capsid protein VP0, and capsid protein VP3 to form heterotrimeric protomers. Five protomers subsequently associate to form pentamers which serve as building blocks for the capsid. Interacts with capsid protein VP2, capsid protein VP3 and capsid protein VP4 following cleavage of capsid protein VP0. Interacts with capsid protein VP1 and capsid protein VP3 in the mature capsid. As to quaternary structure, interacts with capsid protein VP0 and capsid protein VP1 to form heterotrimeric protomers. Five protomers subsequently associate to form pentamers which serve as building blocks for the capsid. Interacts with capsid protein VP4 in the mature capsid. Interacts with protein 2C; this interaction may be important for virion morphogenesis. In terms of assembly, interacts with capsid protein VP1 and capsid protein VP3. Homodimer. As to quaternary structure, homohexamer; forms a hexameric ring structure with 6-fold symmetry characteristic of AAA+ ATPases. Interacts (via N-terminus) with host RTN3 (via reticulon domain); this interaction is important for viral replication. Interacts with capsid protein VP3; this interaction may be important for virion morphogenesis. In terms of assembly, interacts with protein 3CD. Homodimer. Interacts with host GBF1. Interacts (via GOLD domain) with host ACBD3 (via GOLD domain); this interaction allows the formation of a viral protein 3A/ACBD3 heterotetramer with a 2:2 stoichiometry, which will stimulate the recruitment of host PI4KB in order to synthesize PI4P at the viral RNA replication sites. As to quaternary structure, interacts with RNA-directed RNA polymerase. In terms of assembly, interacts with protein 3AB and with RNA-directed RNA polymerase. Interacts with Viral protein genome-linked and with protein 3CD. Mg(2+) serves as cofactor. In terms of processing, specific enzymatic cleavages in vivo by the viral proteases yield processing intermediates and the mature proteins. Post-translationally, myristoylation is required for the formation of pentamers during virus assembly. Further assembly of 12 pentamers and a molecule of genomic RNA generates the provirion. During virion maturation, immature virions are rendered infectious following cleavage of VP0 into VP4 and VP2. This maturation seems to be an autocatalytic event triggered by the presence of RNA in the capsid and it is followed by a conformational change infectious virion. In terms of processing, myristoylation is required during RNA encapsidation and formation of the mature virus particle. Post-translationally, VPg is uridylylated by the polymerase into VPg-pUpU. This acts as a nucleotide-peptide primer for the genomic RNA replication.

It localises to the virion. Its subcellular location is the host cytoplasm. The protein localises to the host cytoplasmic vesicle membrane. It is found in the host nucleus. The enzyme catalyses a ribonucleoside 5'-triphosphate + H2O = a ribonucleoside 5'-diphosphate + phosphate + H(+). The catalysed reaction is Selective cleavage of Tyr-|-Gly bond in the picornavirus polyprotein.. It carries out the reaction RNA(n) + a ribonucleoside 5'-triphosphate = RNA(n+1) + diphosphate. It catalyses the reaction Selective cleavage of Gln-|-Gly bond in the poliovirus polyprotein. In other picornavirus reactions Glu may be substituted for Gln, and Ser or Thr for Gly.. Replication or transcription is subject to high level of random mutations by the nucleotide analog ribavirin. Forms an icosahedral capsid of pseudo T=3 symmetry with capsid proteins VP2 and VP3. The capsid is 300 Angstroms in diameter, composed of 60 copies of each capsid protein and enclosing the viral positive strand RNA genome. Capsid protein VP1 mainly forms the vertices of the capsid. Capsid protein VP1 interacts with host cell receptor to provide virion attachment to target host cells. This attachment induces virion internalization. Tyrosine kinases are probably involved in the entry process. After binding to its receptor, the capsid undergoes conformational changes. Capsid protein VP1 N-terminus (that contains an amphipathic alpha-helix) and capsid protein VP4 are externalized. Together, they shape a pore in the host membrane through which viral genome is translocated to host cell cytoplasm. Functionally, forms an icosahedral capsid of pseudo T=3 symmetry with capsid proteins VP2 and VP3. The capsid is 300 Angstroms in diameter, composed of 60 copies of each capsid protein and enclosing the viral positive strand RNA genome. Its function is as follows. Lies on the inner surface of the capsid shell. After binding to the host receptor, the capsid undergoes conformational changes. Capsid protein VP4 is released, Capsid protein VP1 N-terminus is externalized, and together, they shape a pore in the host membrane through which the viral genome is translocated into the host cell cytoplasm. In terms of biological role, component of immature procapsids, which is cleaved into capsid proteins VP4 and VP2 after maturation. Allows the capsid to remain inactive before the maturation step. Cysteine protease that cleaves viral polyprotein and specific host proteins. It is responsible for the autocatalytic cleavage between the P1 and P2 regions, which is the first cleavage occurring in the polyprotein. Also cleaves the host translation initiation factor EIF4G1, in order to shut down the capped cellular mRNA translation. Inhibits the host nucleus-cytoplasm protein and RNA trafficking by cleaving host members of the nuclear pores. Counteracts stress granule formation probably by antagonizing its assembly or promoting its dissassembly. Functionally, plays an essential role in the virus replication cycle by acting as a viroporin. Creates a pore in the host endoplasmic reticulum and as a consequence releases Ca2+ in the cytoplasm of infected cell. In turn, high levels of cytoplasmic calcium may trigger membrane trafficking and transport of viral ER-associated proteins to viroplasms, sites of viral genome replication. Its function is as follows. Induces and associates with structural rearrangements of intracellular membranes. Displays RNA-binding, nucleotide binding and NTPase activities. May play a role in virion morphogenesis and viral RNA encapsidation by interacting with the capsid protein VP3. In terms of biological role, localizes the viral replication complex to the surface of membranous vesicles. It inhibits host cell endoplasmic reticulum-to-Golgi apparatus transport and causes the disassembly of the Golgi complex, possibly through GBF1 interaction. This would result in depletion of MHC, trail receptors and IFN receptors at the host cell surface. Plays an essential role in viral RNA replication by recruiting ACBD3 and PI4KB at the viral replication sites, thereby allowing the formation of the rearranged membranous structures where viral replication takes place. Acts as a primer for viral RNA replication and remains covalently bound to viral genomic RNA. VPg is uridylylated prior to priming replication into VPg-pUpU. The oriI viral genomic sequence may act as a template for this. The VPg-pUpU is then used as primer on the genomic RNA poly(A) by the RNA-dependent RNA polymerase to replicate the viral genome. During genome replication, the VPg-RNA linkage is removed by the host TDP2, thereby accelerating replication. During the late stage of the replication cycle, host TDP2 is excluded from sites of viral RNA synthesis and encapsidation, allowing for the generation of progeny virions. Functionally, involved in the viral replication complex and viral polypeptide maturation. It exhibits protease activity with a specificity and catalytic efficiency that is different from protease 3C. Protein 3CD lacks polymerase activity. Protein 3CD binds to the 5'UTR of the viral genome. Its function is as follows. Major viral protease that mediates proteolytic processing of the polyprotein. Cleaves host EIF5B, contributing to host translation shutoff. Also cleaves host PABPC1, contributing to host translation shutoff. Cleaves host NLRP1, triggers host N-glycine-mediated degradation of the autoinhibitory NLRP1 N-terminal fragment. In terms of biological role, replicates the viral genomic RNA on the surface of intracellular membranes. May form linear arrays of subunits that propagate along a strong head-to-tail interaction called interface-I. Covalently attaches UMP to a tyrosine of VPg, which is used to prime RNA synthesis. The positive stranded RNA genome is first replicated at virus induced membranous vesicles, creating a dsRNA genomic replication form. This dsRNA is then used as template to synthesize positive stranded RNA genomes. ss(+)RNA genomes are either translated, replicated or encapsidated. This is Genome polyprotein from Human rhinovirus 16 (HRV-16).